Here is a 191-residue protein sequence, read N- to C-terminus: UPF0312 protein PA0423 (191 aa).

The signal sequence occupies residues 1–23 (MLKKTLAALALGSALFTAGQAMA).

It belongs to the UPF0312 family. Type 1 subfamily.

Its subcellular location is the periplasm. This Pseudomonas aeruginosa (strain ATCC 15692 / DSM 22644 / CIP 104116 / JCM 14847 / LMG 12228 / 1C / PRS 101 / PAO1) protein is UPF0312 protein PA0423.